The sequence spans 224 residues: CDP-diacylglycerol--inositol 3-phosphatidyltransferase (224 aa).

The Cytoplasmic segment spans residues M1–N8. A helical transmembrane segment spans residues V9–F29. At W30–N35 the chain is on the lumenal side. The chain crosses the membrane as a helical span at residues Y36–V52. Mg(2+) is bound by residues D50 and D53. Residues D53–R76 are Cytoplasmic-facing. 3 residues coordinate a CDP-1,2-diacyl-sn-glycerol: G54, R58, and T64. Residues D71 and D75 each coordinate Mg(2+). The active-site Proton acceptor is the D75. Residues C77–F97 form a helical membrane-spanning segment. Residue Q98 is a topological domain, lumenal. A helical membrane pass occupies residues L99–G119. Topologically, residues R120–D138 are cytoplasmic. A helical transmembrane segment spans residues I139 to F159. At T160 to P163 the chain is on the lumenal side. Residues L164–L184 form a helical membrane-spanning segment. The Cytoplasmic segment spans residues K185–E224.

It belongs to the CDP-alcohol phosphatidyltransferase class-I family. It depends on Mn(2+) as a cofactor. Mg(2+) is required as a cofactor. In adults, expression is higher in the head than in the body (at protein level).

The protein resides in the apical cell membrane. It is found in the lateral cell membrane. It catalyses the reaction a CDP-1,2-diacyl-sn-glycerol + myo-inositol = a 1,2-diacyl-sn-glycero-3-phospho-(1D-myo-inositol) + CMP + H(+). Catalyzes the biosynthesis of phosphatidylinositol (PtdIns) as well as PtdIns:inositol exchange reaction. May thus act to reduce an excessive cellular PtdIns content. The exchange activity is due to the reverse reaction of PtdIns synthase and is dependent on CMP, which is tightly bound to the enzyme. Required for the regeneration of the signaling molecule phosphatidylinositol 4,5-bisphosphate (PtdInsP2) from phosphatidic acid (PA) and maintenance of its steady supply during signaling, thus playing an essential role during phospholipase C-mediated transduction. This function is essential in photoreceptors for light-activated recycling of PtdInsP2 during phototransduction. As a key enzyme of the phosphoinositide pathway, indirectly involved in the polarized secretion of basal membrane (BM) proteins in follicle epithelial (FE) cells through promoting PtdInsP2 synthesis in the apical and lateral plasma membranes of FE cells. PtdInsP2 controls the localization of Crag and perhaps the localization and expression of strat, both of which are essential for restricting the secretion of BM proteins to the basal surface. This Drosophila melanogaster (Fruit fly) protein is CDP-diacylglycerol--inositol 3-phosphatidyltransferase.